Here is a 154-residue protein sequence, read N- to C-terminus: Proline dehydrogenase transcriptional activator (154 aa).

Residues Ile5–Ile66 enclose the HTH asnC-type domain. Positions Val24–Arg43 form a DNA-binding region, H-T-H motif.

Transcriptional activator of the putA gene in response to proline. The protein is Proline dehydrogenase transcriptional activator (putR) of Rhodobacter capsulatus (Rhodopseudomonas capsulata).